The following is a 328-amino-acid chain: tRNA N6-adenosine threonylcarbamoyltransferase (328 aa).

Fe cation contacts are provided by His-111 and His-115. Substrate-binding positions include Leu-133–Gly-137, Asp-166, Gly-179, Asp-183, and Asn-270. Asp-296 provides a ligand contact to Fe cation.

The protein belongs to the KAE1 / TsaD family. Fe(2+) is required as a cofactor.

Its subcellular location is the cytoplasm. It carries out the reaction L-threonylcarbamoyladenylate + adenosine(37) in tRNA = N(6)-L-threonylcarbamoyladenosine(37) in tRNA + AMP + H(+). In terms of biological role, required for the formation of a threonylcarbamoyl group on adenosine at position 37 (t(6)A37) in tRNAs that read codons beginning with adenine. Is involved in the transfer of the threonylcarbamoyl moiety of threonylcarbamoyl-AMP (TC-AMP) to the N6 group of A37, together with TsaE and TsaB. TsaD likely plays a direct catalytic role in this reaction. The chain is tRNA N6-adenosine threonylcarbamoyltransferase from Phytoplasma australiense.